The following is an 831-amino-acid chain: Periplasmic nitrate reductase (831 aa).

The tat-type signal signal peptide spans 1 to 29; it reads MKFTRREFMKAQAAASAAAVAGIALPATA. The region spanning 41–97 is the 4Fe-4S Mo/W bis-MGD-type domain; sequence IKWEKAPCRFCGTGCSVLVGTQHGRVVATQGDPESPVNKGLNCVKGYFLSKIMYGKD. Positions 48, 51, 55, and 83 each coordinate [4Fe-4S] cluster. Mo-bis(molybdopterin guanine dinucleotide) is bound by residues K85, Q152, N177, C181, 214–221, 245–249, 264–266, M374, Q378, N484, 510–511, K533, D560, and 720–729; these read WGSNMAEM, STYTH, QSD, SD, and TGRVLEHWHS. W796 lines the substrate pocket. The Mo-bis(molybdopterin guanine dinucleotide) site is built by N804 and K821.

It belongs to the prokaryotic molybdopterin-containing oxidoreductase family. NasA/NapA/NarB subfamily. As to quaternary structure, component of the periplasmic nitrate reductase NapAB complex composed of NapA and NapB. It depends on [4Fe-4S] cluster as a cofactor. Mo-bis(molybdopterin guanine dinucleotide) is required as a cofactor. Predicted to be exported by the Tat system. The position of the signal peptide cleavage has not been experimentally proven.

It localises to the periplasm. It catalyses the reaction 2 Fe(II)-[cytochrome] + nitrate + 2 H(+) = 2 Fe(III)-[cytochrome] + nitrite + H2O. Catalytic subunit of the periplasmic nitrate reductase complex NapAB. Receives electrons from NapB and catalyzes the reduction of nitrate to nitrite. The protein is Periplasmic nitrate reductase of Psychromonas ingrahamii (strain DSM 17664 / CCUG 51855 / 37).